Here is a 510-residue protein sequence, read N- to C-terminus: Major facilitator superfamily domain-containing protein 4A (510 aa).

Transmembrane regions (helical) follow at residues 19–39, 53–73, 82–102, 107–127, 139–159, 218–238, 303–323, 345–365, 380–400, 401–421, 434–454, and 462–482; these read LTYW…GPTL, ISWV…LGGV, LWAL…IPFC, VLAS…TVAN, AFFL…SPLI, YAFW…LFLL, FFAI…MMGA, GYLP…SIPV, VGVV…IFLF, VGTA…LAYT, VLVT…GLIF, and FLVC…LLLF.

It belongs to the major facilitator superfamily.

The protein resides in the membrane. The polypeptide is Major facilitator superfamily domain-containing protein 4A (Mus musculus (Mouse)).